Consider the following 107-residue polypeptide: Replication initiation control protein YabA (107 aa).

Residues His81, Cys83, Cys97, and Cys100 each coordinate Zn(2+).

It belongs to the YabA family. Homotetramer. Interacts with both DnaA and DnaN, acting as a bridge between these two proteins. It depends on Zn(2+) as a cofactor.

It is found in the cytoplasm. The protein resides in the nucleoid. Functionally, involved in control of chromosome replication initiation. Inhibits the cooperative binding of DnaA to the oriC region, thus negatively regulating initiation of chromosome replication. Inhibits the ability of DnaA-ATP to form a helix on DNA; does not disassemble preformed DnaA-DNA helices. Decreases the residence time of DnaA on the chromosome at its binding sites (oriC, replication forks and promoter-binding sites). Tethers DnaA to the replication machinery via the DNA polymerase beta sliding clamp subunit (dnaN). Associates with oriC and other DnaA targets on the chromosome in a DnaA-dependent manner. The polypeptide is Replication initiation control protein YabA (Streptococcus pyogenes serotype M3 (strain ATCC BAA-595 / MGAS315)).